A 109-amino-acid polypeptide reads, in one-letter code: Small ribosomal subunit protein uS17 (109 aa).

Belongs to the universal ribosomal protein uS17 family. Part of the 30S ribosomal subunit.

Functionally, one of the primary rRNA binding proteins, it binds specifically to the 5'-end of 16S ribosomal RNA. In Halobacterium salinarum (strain ATCC 29341 / DSM 671 / R1), this protein is Small ribosomal subunit protein uS17.